A 472-amino-acid polypeptide reads, in one-letter code: Adenosylhomocysteinase (472 aa).

Thr-63, Asp-138, and Glu-198 together coordinate substrate. Thr-199–Thr-201 is a binding site for NAD(+). Lys-228 and Asp-232 together coordinate substrate. Residues Asn-233, Gly-262–Gly-267, Glu-285, Asn-320, Ile-341–His-343, and Asn-386 each bind NAD(+).

This sequence belongs to the adenosylhomocysteinase family. Requires NAD(+) as cofactor.

It localises to the cytoplasm. The enzyme catalyses S-adenosyl-L-homocysteine + H2O = L-homocysteine + adenosine. It participates in amino-acid biosynthesis; L-homocysteine biosynthesis; L-homocysteine from S-adenosyl-L-homocysteine: step 1/1. Its function is as follows. May play a key role in the regulation of the intracellular concentration of adenosylhomocysteine. The chain is Adenosylhomocysteinase from Methylococcus capsulatus (strain ATCC 33009 / NCIMB 11132 / Bath).